We begin with the raw amino-acid sequence, 149 residues long: Calmodulin (149 aa).

Ala2 carries the N-acetylalanine modification. 4 EF-hand domains span residues 8 to 43 (EQIAEFKEAFSLFDKDGDGTITTKELGTVMRSLGQN), 44 to 79 (PTEAELQDMINEVDADGDGTIDFPEFLTMMARKMKD), 81 to 116 (DSEEEIREAFRVFDKDGDGFISAAELRHVMTNLGEK), and 117 to 149 (LTDEEVDEMIREADIDGDGQVNYEEFVKMMTSK). Positions 21, 23, 25, 27, 32, 57, 59, 61, 63, 68, 94, 96, 98, and 105 each coordinate Ca(2+). Lys116 is modified (N6,N6,N6-trimethyllysine). Residues Asp130, Asp132, Asp134, Gln136, and Glu141 each contribute to the Ca(2+) site.

This sequence belongs to the calmodulin family.

Functionally, calmodulin mediates the control of a large number of enzymes, ion channels and other proteins by Ca(2+). Among the enzymes to be stimulated by the calmodulin-Ca(2+) complex are a number of protein kinases and phosphatases. This is Calmodulin from Renilla reniformis (Sea pansy).